The sequence spans 494 residues: Protein nucleotidyltransferase YdiU (494 aa).

Residues G99, G101, R102, K118, D130, G131, R181, and R188 each contribute to the ATP site. The active-site Proton acceptor is D261. Residues N262 and D271 each coordinate Mg(2+). D271 provides a ligand contact to ATP.

It belongs to the SELO family. Requires Mg(2+) as cofactor. Mn(2+) is required as a cofactor.

It carries out the reaction L-seryl-[protein] + ATP = 3-O-(5'-adenylyl)-L-seryl-[protein] + diphosphate. The enzyme catalyses L-threonyl-[protein] + ATP = 3-O-(5'-adenylyl)-L-threonyl-[protein] + diphosphate. It catalyses the reaction L-tyrosyl-[protein] + ATP = O-(5'-adenylyl)-L-tyrosyl-[protein] + diphosphate. The catalysed reaction is L-histidyl-[protein] + UTP = N(tele)-(5'-uridylyl)-L-histidyl-[protein] + diphosphate. It carries out the reaction L-seryl-[protein] + UTP = O-(5'-uridylyl)-L-seryl-[protein] + diphosphate. The enzyme catalyses L-tyrosyl-[protein] + UTP = O-(5'-uridylyl)-L-tyrosyl-[protein] + diphosphate. Functionally, nucleotidyltransferase involved in the post-translational modification of proteins. It can catalyze the addition of adenosine monophosphate (AMP) or uridine monophosphate (UMP) to a protein, resulting in modifications known as AMPylation and UMPylation. The polypeptide is Protein nucleotidyltransferase YdiU (Variovorax paradoxus (strain S110)).